The primary structure comprises 64 residues: Translation machinery-associated protein 7 homolog (64 aa).

Residues 1 to 64 (MSGREGGKKK…QGGIKKSGKK (64 aa)) are disordered. Positions 21–50 (EMDEDTAAFKAKQKEQQKALEAAKQKATKG) form a coiled coil. The span at 32–44 (KQKEQQKALEAAK) shows a compositional bias: basic and acidic residues.

The protein belongs to the TMA7 family.

This is Translation machinery-associated protein 7 homolog from Anopheles gambiae (African malaria mosquito).